The following is a 141-amino-acid chain: Zinc finger HIT domain-containing protein 3 (141 aa).

The HIT-type; degenerate zinc finger occupies 1-28 (LEKPKYRCPACRVPYCSVACFRKHKEQC). Zn(2+)-binding residues include cysteine 8, cysteine 11, histidine 24, and cysteine 28. Serine 66 carries the post-translational modification Phosphoserine.

In terms of assembly, thyroid receptor interacting proteins (TRIPs) specifically interact with the ligand binding domain of the thyroid receptor (TR). Requires the presence of thyroid hormone for its interaction. Interacts with NUFIP1. Interacts (via HIT-type zinc finger) with the RUVBL1/RUVBL2 complex in the presence of ADP.

It localises to the cytoplasm. The protein resides in the nucleus. This Pan troglodytes (Chimpanzee) protein is Zinc finger HIT domain-containing protein 3 (ZNHIT3).